A 280-amino-acid polypeptide reads, in one-letter code: Ribosomal RNA small subunit methyltransferase A (280 aa).

Leu-24, Gly-49, Glu-70, Asp-95, and Asn-118 together coordinate S-adenosyl-L-methionine.

It belongs to the class I-like SAM-binding methyltransferase superfamily. rRNA adenine N(6)-methyltransferase family. RsmA subfamily.

Its subcellular location is the cytoplasm. The enzyme catalyses adenosine(1518)/adenosine(1519) in 16S rRNA + 4 S-adenosyl-L-methionine = N(6)-dimethyladenosine(1518)/N(6)-dimethyladenosine(1519) in 16S rRNA + 4 S-adenosyl-L-homocysteine + 4 H(+). Its function is as follows. Specifically dimethylates two adjacent adenosines (A1518 and A1519) in the loop of a conserved hairpin near the 3'-end of 16S rRNA in the 30S particle. May play a critical role in biogenesis of 30S subunits. This chain is Ribosomal RNA small subunit methyltransferase A, found in Syntrophus aciditrophicus (strain SB).